The primary structure comprises 119 residues: NADH-quinone oxidoreductase subunit A (119 aa).

3 helical membrane-spanning segments follow: residues 7–27, 63–83, and 88–108; these read YPVL…VSIG, LVAI…PWGV, and IGWP…LGFA.

It belongs to the complex I subunit 3 family. In terms of assembly, NDH-1 is composed of 14 different subunits. Subunits NuoA, H, J, K, L, M, N constitute the membrane sector of the complex.

It localises to the cell inner membrane. The catalysed reaction is a quinone + NADH + 5 H(+)(in) = a quinol + NAD(+) + 4 H(+)(out). In terms of biological role, NDH-1 shuttles electrons from NADH, via FMN and iron-sulfur (Fe-S) centers, to quinones in the respiratory chain. The immediate electron acceptor for the enzyme in this species is believed to be ubiquinone. Couples the redox reaction to proton translocation (for every two electrons transferred, four hydrogen ions are translocated across the cytoplasmic membrane), and thus conserves the redox energy in a proton gradient. The protein is NADH-quinone oxidoreductase subunit A of Burkholderia vietnamiensis (strain G4 / LMG 22486) (Burkholderia cepacia (strain R1808)).